We begin with the raw amino-acid sequence, 240 residues long: tRNA (guanine-N(1)-)-methyltransferase (240 aa).

S-adenosyl-L-methionine-binding positions include G110 and 129 to 134; that span reads LGDFVL.

Belongs to the RNA methyltransferase TrmD family. As to quaternary structure, homodimer.

It localises to the cytoplasm. The enzyme catalyses guanosine(37) in tRNA + S-adenosyl-L-methionine = N(1)-methylguanosine(37) in tRNA + S-adenosyl-L-homocysteine + H(+). Specifically methylates guanosine-37 in various tRNAs. The chain is tRNA (guanine-N(1)-)-methyltransferase from Clostridium botulinum (strain 657 / Type Ba4).